We begin with the raw amino-acid sequence, 285 residues long: MGKHVQLVMGPAGSGKSTYCDTMRKYCEEIKRSVHIVNLDPAAEVFEYPVSVDIKNLVTVDEVMDELHYGPNGGLVYAMEYLIENMDWLTDELGDYEDDYLIIDCPGQIELYSHIPVMRILVDHLQQIGYSVCSVFLVDSQFILDNCKFISGALMCLSAMVRLEVPHINVLTKIDVLKTSDQYKEIEKFLDLEVQNLVEELNLETHDRYHRMNKAIGSLLEDFSLVGFVPLDITDQESLNVLLQHIDNSIQYGEDLEPKEPPLENDDDDDDDEGDEIIRMMNGNL.

Glycine 13–threonine 18 is a GTP binding site. The Gly-Pro-Asn (GPN)-loop; involved in dimer interface motif lies at glycine 70–asparagine 72. Threonine 172–aspartate 175 lines the GTP pocket. The segment at glycine 253 to glutamate 276 is disordered. Positions leucine 263–aspartate 275 are enriched in acidic residues.

It belongs to the GPN-loop GTPase family. In terms of assembly, heterodimer with gpn1. Binds to RNA polymerase II (RNAPII).

Its function is as follows. Small GTPase required for proper localization of RNA polymerase II (RNAPII). May act at an RNAP assembly step prior to nuclear import. The chain is GPN-loop GTPase 3 (gpn3) from Dictyostelium discoideum (Social amoeba).